We begin with the raw amino-acid sequence, 518 residues long: Chromosomal replication initiator protein DnaA (518 aa).

A domain I, interacts with DnaA modulators region spans residues 1–72 (MNEFWQHCSA…DLARDFWHSP (72 aa)). Residues 72 to 181 (PVDVQFVLDP…GESDSTYERS (110 aa)) form a domain II region. The segment at 155–178 (AAARRTWRPGAAAQAAGGESDSTY) is disordered. The tract at residues 182–398 (KLNPVLTFDN…GALRKILAYS (217 aa)) is domain III, AAA+ region. 4 residues coordinate ATP: G226, G228, K229, and T230. Residues 399 to 518 (KFHGREITIE…LHVLEQTLKG (120 aa)) form a domain IV, binds dsDNA region.

Belongs to the DnaA family. Oligomerizes as a right-handed, spiral filament on DNA at oriC.

The protein localises to the cytoplasm. In terms of biological role, plays an essential role in the initiation and regulation of chromosomal replication. ATP-DnaA binds to the origin of replication (oriC) to initiate formation of the DNA replication initiation complex once per cell cycle. Binds the DnaA box (a 9 base pair repeat at the origin) and separates the double-stranded (ds)DNA. Forms a right-handed helical filament on oriC DNA; dsDNA binds to the exterior of the filament while single-stranded (ss)DNA is stabiized in the filament's interior. The ATP-DnaA-oriC complex binds and stabilizes one strand of the AT-rich DNA unwinding element (DUE), permitting loading of DNA polymerase. After initiation quickly degrades to an ADP-DnaA complex that is not apt for DNA replication. Binds acidic phospholipids. The protein is Chromosomal replication initiator protein DnaA of Paraburkholderia phymatum (strain DSM 17167 / CIP 108236 / LMG 21445 / STM815) (Burkholderia phymatum).